Consider the following 1235-residue polypeptide: Chitin synthase 4 (1235 aa).

Residues 1 to 11 (MSLPRRPGPSP) show a composition bias toward pro residues. The segment at 1–203 (MSLPRRPGPS…ASKGKREKSG (203 aa)) is disordered. Residues 1–212 (MSLPRRPGPS…GGLPTPSFWN (212 aa)) lie on the Cytoplasmic side of the membrane. Positions 19-28 (YRQSGSRRSR) are enriched in basic residues. A compositionally biased stretch (polar residues) spans 46-59 (PSQQQRVPSISSFP). Basic and acidic residues predominate over residues 94 to 107 (IRPERNRIGKDHPN). Residues 116-125 (NMNTLPSSTG) show a composition bias toward polar residues. Positions 169–187 (ETEKSGDERRRRRKSDTTK) are enriched in basic and acidic residues. Residues 188-199 (HGKIVKASKGKR) show a composition bias toward basic residues. A helical membrane pass occupies residues 213-233 (IYCGFVTFWCPGFVLKCFGMP). Residues 234–244 (EMAQQRAWREK) are Extracellular-facing. Residues 245–265 (MGLISIILLIMGFVGFITFGF) form a helical membrane-spanning segment. Topologically, residues 266 to 514 (TQVVCGKPPL…ASKVVLYVSL (249 aa)) are cytoplasmic. The helical transmembrane segment at 515-535 (VLILAVVLARFVLALIFQWFI) threads the bilayer. Over 536 to 1065 (SKTYAAAKTS…SMQFIVGIEL (530 aa)) the chain is Extracellular. The disordered stretch occupies residues 545–592 (SQTSDQRKRNRQIEDWTEDIYRAPPRLPGEVGSSVAGSSDRQSKRSSA). Over residues 549–558 (DQRKRNRQIE) the composition is skewed to basic and acidic residues. Asn-639 is a glycosylation site (N-linked (GlcNAc...) asparagine). The disordered stretch occupies residues 645-670 (FLKSDAYGSSSSPADGPGPAGFIHEA). Residues 648 to 665 (SDAYGSSSSPADGPGPAG) are compositionally biased toward low complexity. N-linked (GlcNAc...) asparagine glycosylation occurs at Asn-1034. Residues 1066 to 1086 (IGTLVLPAAIAFTFYVVIISI) traverse the membrane as a helical segment. Over 1087-1092 (INSPPQ) the chain is Cytoplasmic. Residues 1093–1113 (IIPLVLLGLILGLPAILVVVT) form a helical membrane-spanning segment. The Extracellular portion of the chain corresponds to 1114 to 1116 (AHS). Residues 1117 to 1137 (WSYIIWMFIYLLSLPVWNFVL) form a helical membrane-spanning segment. Residues 1138-1235 (PTYAFWKFDD…RHFDDYFSDA (98 aa)) are Cytoplasmic-facing. The tract at residues 1201-1235 (RDNVISGVGGSNGWGSSQPRGHEQGRHFDDYFSDA) is disordered. A compositionally biased stretch (basic and acidic residues) spans 1220-1235 (RGHEQGRHFDDYFSDA).

This sequence belongs to the chitin synthase family. Class IV subfamily.

Its subcellular location is the cell membrane. The enzyme catalyses [(1-&gt;4)-N-acetyl-beta-D-glucosaminyl](n) + UDP-N-acetyl-alpha-D-glucosamine = [(1-&gt;4)-N-acetyl-beta-D-glucosaminyl](n+1) + UDP + H(+). Functionally, polymerizes chitin, a structural polymer of the cell wall and septum, by transferring the sugar moiety of UDP-GlcNAc to the non-reducing end of the growing chitin polymer. This chain is Chitin synthase 4 (chs-4), found in Neurospora crassa (strain ATCC 24698 / 74-OR23-1A / CBS 708.71 / DSM 1257 / FGSC 987).